The sequence spans 235 residues: Leucyl/phenylalanyl-tRNA--protein transferase (235 aa).

Belongs to the L/F-transferase family.

Its subcellular location is the cytoplasm. The enzyme catalyses N-terminal L-lysyl-[protein] + L-leucyl-tRNA(Leu) = N-terminal L-leucyl-L-lysyl-[protein] + tRNA(Leu) + H(+). It carries out the reaction N-terminal L-arginyl-[protein] + L-leucyl-tRNA(Leu) = N-terminal L-leucyl-L-arginyl-[protein] + tRNA(Leu) + H(+). It catalyses the reaction L-phenylalanyl-tRNA(Phe) + an N-terminal L-alpha-aminoacyl-[protein] = an N-terminal L-phenylalanyl-L-alpha-aminoacyl-[protein] + tRNA(Phe). Functionally, functions in the N-end rule pathway of protein degradation where it conjugates Leu, Phe and, less efficiently, Met from aminoacyl-tRNAs to the N-termini of proteins containing an N-terminal arginine or lysine. The chain is Leucyl/phenylalanyl-tRNA--protein transferase from Azoarcus sp. (strain BH72).